A 279-amino-acid polypeptide reads, in one-letter code: Urease accessory protein UreD (279 aa).

This sequence belongs to the UreD family. UreD, UreF and UreG form a complex that acts as a GTP-hydrolysis-dependent molecular chaperone, activating the urease apoprotein by helping to assemble the nickel containing metallocenter of UreC. The UreE protein probably delivers the nickel.

The protein localises to the cytoplasm. In terms of biological role, required for maturation of urease via the functional incorporation of the urease nickel metallocenter. The polypeptide is Urease accessory protein UreD (Streptococcus thermophilus (strain CNRZ 1066)).